A 401-amino-acid polypeptide reads, in one-letter code: Odorant receptor 88a (401 aa).

Over 1 to 26 the chain is Cytoplasmic; sequence MKPTEIKKPYRMEEFLRPQMFQEVAQ. The chain crosses the membrane as a helical span at residues 27–47; the sequence is MVHFQWRRNPVDNSMVNASMV. The Extracellular portion of the chain corresponds to 48–52; that stretch reads PFCLS. A helical transmembrane segment spans residues 53 to 73; it reads AFLNVLFFGCNGWDIIGHFWL. Residues 74–142 lie on the Cytoplasmic side of the membrane; sequence GHPANQNPPV…NFWQRYRFIR (69 aa). A helical transmembrane segment spans residues 143 to 163; sequence IYSHLGGPMFCVVPLALFLLT. The Extracellular portion of the chain corresponds to 164 to 191; that stretch reads HEGKDTPVAQHEQLLGGWLPCGVRKDPN. A helical membrane pass occupies residues 192 to 212; sequence FYLLVWSFDLMCTTCGVSFFV. Over 213–277 the chain is Cytoplasmic; it reads TFDNLFNVMQ…LCRKYNDIFK (65 aa). Residues 278–298 traverse the membrane as a helical segment; it reads VAFLVSNFVGAGSLCFYLFML. The Extracellular segment spans residues 299–303; the sequence is SETSD. A helical transmembrane segment spans residues 304–324; it reads VLIIAQYILPTLVLVGFTFEI. Residues 325 to 370 lie on the Cytoplasmic side of the membrane; the sequence is CLRGTQLEKASEGLESSLRSQEWYLGSRRYRKFYLLWTQYCQRTQQ. Residues 371 to 391 form a helical membrane-spanning segment; the sequence is LGAFGLIQVNMVHFTEIMQLA. Over 392–401 the chain is Extracellular; that stretch reads YRLFTFLKSH.

This sequence belongs to the insect chemoreceptor superfamily. Heteromeric odorant receptor channel (TC 1.A.69) family. Or49a subfamily. In terms of assembly, interacts with Orco. Complexes exist early in the endomembrane system in olfactory sensory neurons (OSNs), coupling these complexes to the conserved ciliary trafficking pathway. In terms of tissue distribution, expressed in olfactory sensory neurons in the antenna.

It localises to the cell membrane. Its function is as follows. Odorant receptor which mediates acceptance or avoidance behavior, depending on its substrates. The odorant receptor repertoire encodes a large collection of odor stimuli that vary widely in identity, intensity, and duration. May form a complex with Orco to form odorant-sensing units, providing sensitive and prolonged odorant signaling and calcium permeability. The protein is Odorant receptor 88a (Or88a) of Drosophila melanogaster (Fruit fly).